Reading from the N-terminus, the 799-residue chain is MSQLRSGASAPRSPFPLLPLRTGVLFPGTVLTLPVGRPRSVALLNAVHAGDVIGVIAQRDPKREDPRREDLHDIGTFARVVDISRVSNGYRLVIEGLDRFALSALVETEPTWRAEGTLAPEFLGDAEEARLLAASLRERAREVGPKTGTNLAEIAATSRAEPGVFADQVAGALGLPTEKEMEVLSELRVVPRLQRVAGLLAEASALADLKKKIDGDVRRELGKGQREVILREQLRAIQKELAGGEEGEDELSALRRRLDEAGLPEEARAVADRELRRLESVGPQSAEHNVIRTYLEWIADLPWSARAEVKDDLDAVKAKLDEEHRGLDDVKRRILEHMAVLKLTGKARATILCFAGPPGVGKTSLGQSIADATGRPFVRISLGGVHDEAELRGHRRTYVGALPGRIVHALKKAKVKNPIVLLDEVDKLGAGWRGSPEAALLEVLDPEQNRTFVDHYLELPFDLSEVVFLCTVNDLGALSAPLRDRLEVIELSGYTPDEKIAIARSHLVPKQLKEHAIDPGSLSITDEALAAIVRDYTREAGVRQLGREIKKLCRAVALEIARAADGKAPRVVVEASDLGTYLGKVRFFSDVAERTSVAGVATGLAWTPVGGDILFIETSRMPGKGRVEITGQLGDVMKESAKAALTYVRSHAIELGVDTAKLEAEDLHIHVPAGGVPKDGPSAGVTMFTALTSLLSARRVRSDTAMTGECTLRGRVLPVGGIKSKVLAAHRAGIKRVVLPQKNARDAEEIPKEVRAELELIFVEDMSQVIAAALEEAPIEAAGTGGVTGAAAGEPAAAA.

In terms of domain architecture, Lon N-terminal spans 15–204 (FPLLPLRTGV…RVAGLLAEAS (190 aa)). An ATP-binding site is contributed by 356 to 363 (GPPGVGKT). The 182-residue stretch at 595–776 (TSVAGVATGL…SQVIAAALEE (182 aa)) folds into the Lon proteolytic domain. Catalysis depends on residues serine 682 and lysine 725.

It belongs to the peptidase S16 family. In terms of assembly, homohexamer. Organized in a ring with a central cavity.

The protein localises to the cytoplasm. It carries out the reaction Hydrolysis of proteins in presence of ATP.. Its function is as follows. ATP-dependent serine protease that mediates the selective degradation of mutant and abnormal proteins as well as certain short-lived regulatory proteins. Required for cellular homeostasis and for survival from DNA damage and developmental changes induced by stress. Degrades polypeptides processively to yield small peptide fragments that are 5 to 10 amino acids long. Binds to DNA in a double-stranded, site-specific manner. This is Lon protease 4 from Sorangium cellulosum (strain So ce56) (Polyangium cellulosum (strain So ce56)).